Consider the following 184-residue polypeptide: Endoribonuclease YbeY (184 aa).

Residues His146, His150, and His156 each contribute to the Zn(2+) site.

The protein belongs to the endoribonuclease YbeY family. The cofactor is Zn(2+).

The protein resides in the cytoplasm. Single strand-specific metallo-endoribonuclease involved in late-stage 70S ribosome quality control and in maturation of the 3' terminus of the 16S rRNA. The polypeptide is Endoribonuclease YbeY (Nostoc sp. (strain PCC 7120 / SAG 25.82 / UTEX 2576)).